Consider the following 554-residue polypeptide: Protein SINE2 (554 aa).

An ARMADILLO-type fold region spans residues 17–290; that stretch reads DKDPDSHKTA…MAAHETMRQA (274 aa). 3 disordered regions span residues 306-332, 411-442, and 465-487; these read CKPR…VYSR, NESV…KHHR, and ETSS…TTED. Residues 311–321 show a composition bias toward low complexity; that stretch reads SLSGSVKSTSS. Residues 322 to 332 are compositionally biased toward basic and acidic residues; that stretch reads LREHDGSVYSR. Residues 419 to 431 show a composition bias toward basic residues; it reads NRSRSSRRNTKKR. The segment covering 465–485 has biased composition (low complexity); it reads ETSSSSSIYDTSGTTTPTNTT. The region spanning 509 to 554 is the KASH domain; sequence LDPRLGRSKGVLKLGLSVFSIAVAGFASFMWMYLQDDMMPPHLVPT. A helical membrane pass occupies residues 522-542; that stretch reads LGLSVFSIAVAGFASFMWMYL. Residues 551–554 carry the Required for nuclear localization motif; it reads LVPT.

As to quaternary structure, interacts with SUN1 and SUN2. As to expression, expressed in epidermal cells, mesophyll cells, trichomes and root cells.

It is found in the nucleus membrane. In terms of biological role, plays a role in innate immunity against the oomycete pathogen A.arabidopsidis (Hpa). The protein is Protein SINE2 of Arabidopsis thaliana (Mouse-ear cress).